Here is a 200-residue protein sequence, read N- to C-terminus: Recombination protein RecR (200 aa).

A C4-type zinc finger spans residues 58–75; that stretch reads CPCCFCLKNFPESQCEFC. Positions 82–177 constitute a Toprim domain; that stretch reads STLCIVASPK…SISRLALGLP (96 aa).

This sequence belongs to the RecR family.

May play a role in DNA repair. It seems to be involved in an RecBC-independent recombinational process of DNA repair. It may act with RecF and RecO. The protein is Recombination protein RecR of Chlamydia felis (strain Fe/C-56) (Chlamydophila felis).